A 264-amino-acid chain; its full sequence is Thymidylate synthase (264 aa).

R21 serves as a coordination point for dUMP. A (6R)-5,10-methylene-5,6,7,8-tetrahydrofolate-binding site is contributed by H51. 126 to 127 serves as a coordination point for dUMP; the sequence is RR. C146 functions as the Nucleophile in the catalytic mechanism. DUMP is bound by residues 166 to 169, N177, and 207 to 209; these read RSAD and HLY. D169 serves as a coordination point for (6R)-5,10-methylene-5,6,7,8-tetrahydrofolate. Position 263 (A263) interacts with (6R)-5,10-methylene-5,6,7,8-tetrahydrofolate.

The protein belongs to the thymidylate synthase family. Bacterial-type ThyA subfamily. As to quaternary structure, homodimer.

It is found in the cytoplasm. It carries out the reaction dUMP + (6R)-5,10-methylene-5,6,7,8-tetrahydrofolate = 7,8-dihydrofolate + dTMP. Its pathway is pyrimidine metabolism; dTTP biosynthesis. Its function is as follows. Catalyzes the reductive methylation of 2'-deoxyuridine-5'-monophosphate (dUMP) to 2'-deoxythymidine-5'-monophosphate (dTMP) while utilizing 5,10-methylenetetrahydrofolate (mTHF) as the methyl donor and reductant in the reaction, yielding dihydrofolate (DHF) as a by-product. This enzymatic reaction provides an intracellular de novo source of dTMP, an essential precursor for DNA biosynthesis. The chain is Thymidylate synthase from Bartonella quintana (strain Toulouse) (Rochalimaea quintana).